We begin with the raw amino-acid sequence, 74 residues long: Tau-AnmTx Ueq 12-1 (74 aa).

The first 18 residues, 1–18 (MCLLMLVLGAMYVQGWHS), serve as a signal peptide directing secretion. The propeptide at 19-27 (AGFGKRTLK) is removed in mature form. 5 disulfide bridges follow: C30–C37, C40–C71, C46–C64, C51–C72, and C58–C73.

Belongs to the Cnidaria small cysteine-rich protein (SCRiP) family. Detected in mucus secreted from ectoderm.

It is found in the secreted. Potentiates activation of mammalian TRPA1, a non-selective cation channel involved in perception of pain, in vitro yet has an analgesic and anti-inflammatory effect in vivo. Has antibacterial activity against C.glutamicum (MIC=50 uM) and, to a lesser extent, against S.aureus but not against P.aeruginosa or E.coli. This is Tau-AnmTx Ueq 12-1 from Urticina eques (Sea anemone).